The following is a 432-amino-acid chain: D-amino acid dehydrogenase (432 aa).

3–17 (VLVLGSGVVGTASAY) is a binding site for FAD.

The protein belongs to the DadA oxidoreductase family. It depends on FAD as a cofactor.

The catalysed reaction is a D-alpha-amino acid + A + H2O = a 2-oxocarboxylate + AH2 + NH4(+). It participates in amino-acid degradation; D-alanine degradation; NH(3) and pyruvate from D-alanine: step 1/1. Oxidative deamination of D-amino acids. The protein is D-amino acid dehydrogenase of Stutzerimonas stutzeri (strain A1501) (Pseudomonas stutzeri).